A 122-amino-acid chain; its full sequence is Large ribosomal subunit protein uL14 (122 aa).

The protein belongs to the universal ribosomal protein uL14 family. In terms of assembly, part of the 50S ribosomal subunit. Forms a cluster with proteins L3 and L19. In the 70S ribosome, L14 and L19 interact and together make contacts with the 16S rRNA in bridges B5 and B8.

Binds to 23S rRNA. Forms part of two intersubunit bridges in the 70S ribosome. The sequence is that of Large ribosomal subunit protein uL14 from Neisseria meningitidis serogroup C (strain 053442).